Reading from the N-terminus, the 461-residue chain is ATP synthase subunit beta (461 aa).

151–158 is an ATP binding site; sequence GGAGVGKT.

This sequence belongs to the ATPase alpha/beta chains family. F-type ATPases have 2 components, CF(1) - the catalytic core - and CF(0) - the membrane proton channel. CF(1) has five subunits: alpha(3), beta(3), gamma(1), delta(1), epsilon(1). CF(0) has three main subunits: a(1), b(2) and c(9-12). The alpha and beta chains form an alternating ring which encloses part of the gamma chain. CF(1) is attached to CF(0) by a central stalk formed by the gamma and epsilon chains, while a peripheral stalk is formed by the delta and b chains.

Its subcellular location is the cell inner membrane. The enzyme catalyses ATP + H2O + 4 H(+)(in) = ADP + phosphate + 5 H(+)(out). Its function is as follows. Produces ATP from ADP in the presence of a proton gradient across the membrane. The catalytic sites are hosted primarily by the beta subunits. This chain is ATP synthase subunit beta, found in Idiomarina loihiensis (strain ATCC BAA-735 / DSM 15497 / L2-TR).